The following is a 185-amino-acid chain: Elongation factor P (185 aa).

It belongs to the elongation factor P family.

Its subcellular location is the cytoplasm. It participates in protein biosynthesis; polypeptide chain elongation. Functionally, involved in peptide bond synthesis. Stimulates efficient translation and peptide-bond synthesis on native or reconstituted 70S ribosomes in vitro. Probably functions indirectly by altering the affinity of the ribosome for aminoacyl-tRNA, thus increasing their reactivity as acceptors for peptidyl transferase. The protein is Elongation factor P of Oleidesulfovibrio alaskensis (strain ATCC BAA-1058 / DSM 17464 / G20) (Desulfovibrio alaskensis).